A 409-amino-acid polypeptide reads, in one-letter code: Multifunctional CCA protein (409 aa).

Residues glycine 8 and arginine 11 each contribute to the ATP site. The CTP site is built by glycine 8 and arginine 11. Mg(2+)-binding residues include aspartate 21 and aspartate 23. 3 residues coordinate ATP: arginine 91, arginine 137, and arginine 140. Positions 91, 137, and 140 each coordinate CTP. Positions 228–329 (TGAHTLSVLL…LELLQSFDVF (102 aa)) constitute an HD domain.

It belongs to the tRNA nucleotidyltransferase/poly(A) polymerase family. Bacterial CCA-adding enzyme type 1 subfamily. Monomer. Can also form homodimers and oligomers. Mg(2+) is required as a cofactor. It depends on Ni(2+) as a cofactor.

It carries out the reaction a tRNA precursor + 2 CTP + ATP = a tRNA with a 3' CCA end + 3 diphosphate. It catalyses the reaction a tRNA with a 3' CCA end + 2 CTP + ATP = a tRNA with a 3' CCACCA end + 3 diphosphate. Its function is as follows. Catalyzes the addition and repair of the essential 3'-terminal CCA sequence in tRNAs without using a nucleic acid template. Adds these three nucleotides in the order of C, C, and A to the tRNA nucleotide-73, using CTP and ATP as substrates and producing inorganic pyrophosphate. tRNA 3'-terminal CCA addition is required both for tRNA processing and repair. Also involved in tRNA surveillance by mediating tandem CCA addition to generate a CCACCA at the 3' terminus of unstable tRNAs. While stable tRNAs receive only 3'-terminal CCA, unstable tRNAs are marked with CCACCA and rapidly degraded. The protein is Multifunctional CCA protein of Pseudomonas fluorescens (strain ATCC BAA-477 / NRRL B-23932 / Pf-5).